The chain runs to 310 residues: Ribosomal RNA small subunit methyltransferase H (310 aa).

S-adenosyl-L-methionine-binding positions include 47–49 (GGH), D66, F93, D108, and Q115.

It belongs to the methyltransferase superfamily. RsmH family.

It is found in the cytoplasm. The enzyme catalyses cytidine(1402) in 16S rRNA + S-adenosyl-L-methionine = N(4)-methylcytidine(1402) in 16S rRNA + S-adenosyl-L-homocysteine + H(+). Specifically methylates the N4 position of cytidine in position 1402 (C1402) of 16S rRNA. In Prochlorococcus marinus (strain MIT 9303), this protein is Ribosomal RNA small subunit methyltransferase H.